A 137-amino-acid polypeptide reads, in one-letter code: Putative nickel-responsive regulator (137 aa).

His-79, His-90, His-92, and Cys-98 together coordinate Ni(2+).

It belongs to the transcriptional regulatory CopG/NikR family. It depends on Ni(2+) as a cofactor.

Its function is as follows. Transcriptional regulator. This is Putative nickel-responsive regulator from Campylobacter concisus (strain 13826).